Reading from the N-terminus, the 979-residue chain is Protein argonaute PNH1 (979 aa).

The tract at residues 1–95 (MLEVLDMAPP…GGRAGAGPGP (95 aa)) is disordered. A compositionally biased stretch (low complexity) spans 54–67 (AETAAATAAVAPPE). Basic residues predominate over residues 77–86 (GRRRGGRGRG). The PAZ domain maps to 333–446 (PVIEFVAQIL…LPMEACKIVE (114 aa)). In terms of domain architecture, Piwi spans 620–941 (LLLAILPDNN…AAFRARFYME (322 aa)).

This sequence belongs to the argonaute family. Ago subfamily.

It localises to the cytoplasm. Its function is as follows. Probably involved in the RNA silencing pathway. May bind to short RNAs such as microRNAs (miRNAs) or short interfering RNAs (siRNAs), and represses the translation of mRNAs which are complementary to them. Plays a role in the maintenance of the indeterminate state of the stem cells in the shoot apical meristem (SAM). Regulates leaf formation through vascular development and may be involved in determining the central domain of the leaf founder region. In Oryza sativa subsp. japonica (Rice), this protein is Protein argonaute PNH1 (PHN1).